The chain runs to 103 residues: Large ribosomal subunit protein bL21 (103 aa).

Belongs to the bacterial ribosomal protein bL21 family. Part of the 50S ribosomal subunit. Contacts protein L20.

Its function is as follows. This protein binds to 23S rRNA in the presence of protein L20. This is Large ribosomal subunit protein bL21 from Ralstonia nicotianae (strain ATCC BAA-1114 / GMI1000) (Ralstonia solanacearum).